Reading from the N-terminus, the 407-residue chain is SERPINE1 mRNA-binding protein 1 (407 aa).

Residue S25 is modified to Phosphoserine. The interval 33–227 (AAENKKKEAG…GSGSHNWGTV (195 aa)) is disordered. Residues 51–68 (AKSAAQAAAQTNSNAAGK) are compositionally biased toward low complexity. K52 carries the N6-acetyllysine; alternate modification. K52 is covalently cross-linked (Glycyl lysine isopeptide (Lys-Gly) (interchain with G-Cter in SUMO1); alternate). Residue K68 is modified to N6-acetyllysine. Basic and acidic residues-rich tracts occupy residues 70–80 (LRKESQKDRKN), 89–114 (VDKK…RRPD), and 122–162 (KIID…DRPI). K102 participates in a covalent cross-link: Glycyl lysine isopeptide (Lys-Gly) (interchain with G-Cter in SUMO1); alternate. K102 is covalently cross-linked (Glycyl lysine isopeptide (Lys-Gly) (interchain with G-Cter in SUMO2)). K102 participates in a covalent cross-link: Glycyl lysine isopeptide (Lys-Gly) (interchain with G-Cter in SUMO2); alternate. An N6-acetyllysine mark is found at K122 and K140. Over residues 164–182 (GRGGLGRGRGGRGRGMGRG) the composition is skewed to gly residues. 2 positions are modified to omega-N-methylarginine: R165 and R188. Basic and acidic residues predominate over residues 183–199 (DGFDSRGKREFDRHSGS). Phosphoserine occurs at positions 197, 199, 203, 205, and 208. Position 211 is an N6-acetyllysine; alternate (K211). K211 is covalently cross-linked (Glycyl lysine isopeptide (Lys-Gly) (interchain with G-Cter in SUMO2); alternate). R216 carries the omega-N-methylarginine modification. S221 is modified (phosphoserine). At T226 the chain carries Phosphothreonine. A Glycyl lysine isopeptide (Lys-Gly) (interchain with G-Cter in SUMO1); alternate cross-link involves residue K228. K228 is covalently cross-linked (Glycyl lysine isopeptide (Lys-Gly) (interchain with G-Cter in SUMO2); alternate). Residue S234 is modified to Phosphoserine. The span at 242–256 (ISYNCSDLDQSNVTE) shows a compositional bias: polar residues. Disordered regions lie at residues 242–291 (ISYN…TLDE) and 327–407 (SKSE…PALA). The span at 261-274 (GEEHPVADTENKEN) shows a compositional bias: basic and acidic residues. Residue K280 forms a Glycyl lysine isopeptide (Lys-Gly) (interchain with G-Cter in SUMO1); alternate linkage. Residue K280 forms a Glycyl lysine isopeptide (Lys-Gly) (interchain with G-Cter in SUMO2) linkage. K280 participates in a covalent cross-link: Glycyl lysine isopeptide (Lys-Gly) (interchain with G-Cter in SUMO2); alternate. 2 stretches are compositionally biased toward basic and acidic residues: residues 281-291 (EEGPKEMTLDE) and 327-341 (SKSE…VMDH). At K328 the chain carries N6-acetyllysine. S329 bears the Phosphoserine mark. Residues 362-371 (GRPGRGGRGG) are compositionally biased toward gly residues. Residues R363, R366, and R369 each carry the omega-N-methylarginine modification. Residues S391 and S393 each carry the phosphoserine modification.

This sequence belongs to the SERBP1-HABP4 family. Associates with mature 80S ribosomes. Interacts with EEF2/eEF2; interaction sequesters EEF2/eEF2 at the A-site of the ribosome, thereby blocking the interaction sites of the mRNA-tRNA complex, promoting ribosome stabilization and hibernation. Interacts with SPIN1. Interacts with CHD3 and TDRD3. Interacts with ZDHHC17 (via ANK repeats). Post-translationally, phosphorylation by MTOR inhibits SERBP1 and relieves ribosome hibernation.

Its function is as follows. Ribosome-binding protein that promotes ribosome hibernation, a process during which ribosomes are stabilized in an inactive state and preserved from proteasomal degradation. Acts via its association with EEF2/eEF2 factor, sequestering EEF2/eEF2 at the A-site of the ribosome and promoting ribosome stabilization and storage in an inactive state. May also play a role in the regulation of mRNA stability: binds to the 3'-most 134 nt of the SERPINE1/PAI1 mRNA, a region which confers cyclic nucleotide regulation of message decay. Seems to play a role in PML-nuclear bodies formation. The polypeptide is SERPINE1 mRNA-binding protein 1 (Oryctolagus cuniculus (Rabbit)).